A 335-amino-acid chain; its full sequence is UDP-N-acetylenolpyruvoylglucosamine reductase 1 (335 aa).

The FAD-binding PCMH-type domain occupies R36 to G202. The active site involves R181. Catalysis depends on S231, which acts as the Proton donor. E306 is an active-site residue.

The protein belongs to the MurB family. FAD is required as a cofactor.

The protein resides in the cytoplasm. The catalysed reaction is UDP-N-acetyl-alpha-D-muramate + NADP(+) = UDP-N-acetyl-3-O-(1-carboxyvinyl)-alpha-D-glucosamine + NADPH + H(+). Its pathway is cell wall biogenesis; peptidoglycan biosynthesis. Its function is as follows. Cell wall formation. This Corynebacterium glutamicum (strain ATCC 13032 / DSM 20300 / JCM 1318 / BCRC 11384 / CCUG 27702 / LMG 3730 / NBRC 12168 / NCIMB 10025 / NRRL B-2784 / 534) protein is UDP-N-acetylenolpyruvoylglucosamine reductase 1 (murB1).